The primary structure comprises 508 residues: Photosystem II CP47 reaction center protein (508 aa).

6 consecutive transmembrane segments (helical) span residues 21–36 (SVHIMHTALVAGWAGS), 101–115 (IAFSGLCFLAAIWHW), 140–156 (GIHLFLSGVACFGFGAF), 203–218 (IAAGTLGILAGLFHLS), 237–252 (VLSSSIAAVFFAAFVV), and 457–472 (SFALLFFFGHIWHGAR).

Belongs to the PsbB/PsbC family. PsbB subfamily. PSII is composed of 1 copy each of membrane proteins PsbA, PsbB, PsbC, PsbD, PsbE, PsbF, PsbH, PsbI, PsbJ, PsbK, PsbL, PsbM, PsbT, PsbX, PsbY, PsbZ, Psb30/Ycf12, at least 3 peripheral proteins of the oxygen-evolving complex and a large number of cofactors. It forms dimeric complexes. Binds multiple chlorophylls. PSII binds additional chlorophylls, carotenoids and specific lipids. serves as cofactor.

The protein resides in the plastid membrane. Functionally, one of the components of the core complex of photosystem II (PSII). It binds chlorophyll and helps catalyze the primary light-induced photochemical processes of PSII. PSII is a light-driven water:plastoquinone oxidoreductase, using light energy to abstract electrons from H(2)O, generating O(2) and a proton gradient subsequently used for ATP formation. The polypeptide is Photosystem II CP47 reaction center protein (Cuscuta reflexa (Southern Asian dodder)).